The chain runs to 351 residues: MENNILELRNVTKEYDGQVVLKGISFNVKEGEFITLLGPSGCGKTTILKIIGGSQKPNSGEILFEDKNLIPIPINKRQFNTIFQSYALFPHLNVFDNVAFGLTIKKTKKDIIEREVMRQIRQVGLEGYENKKIDELSGGQKQRIAIARALVMKPKVLLLDEPMAALDVKLRKTMQEELKRLQQDIGITFIMVSHDQEEALSMSDRIVVMNQGTIQQIGTPEEIYNEPENAWVANFIGSSNIITDGIFLEDNKIKFDGKVFECIDTNFGENESSIDIIIRPEDIIIKNPNNGFFNAKVIKTTFKGIHWEIVVETSKKRQWIIHTINEYDVDQQVSIKWKPANVHVMWKEVDN.

The region spanning 6–236 is the ABC transporter domain; it reads LELRNVTKEY…PENAWVANFI (231 aa). 38–45 contacts ATP; it reads GPSGCGKT.

This sequence belongs to the ABC transporter superfamily. Spermidine/putrescine importer (TC 3.A.1.11.1) family. The complex is composed of two ATP-binding proteins (PotA), two transmembrane proteins (PotB and PotC) and a solute-binding protein (PotD).

The protein localises to the cell membrane. It carries out the reaction ATP + H2O + polyamine-[polyamine-binding protein]Side 1 = ADP + phosphate + polyamineSide 2 + [polyamine-binding protein]Side 1.. Functionally, part of the ABC transporter complex PotABCD involved in spermidine/putrescine import. Responsible for energy coupling to the transport system. This is Spermidine/putrescine import ATP-binding protein PotA from Mycoplasma mycoides subsp. mycoides SC (strain CCUG 32753 / NCTC 10114 / PG1).